The primary structure comprises 106 residues: PAT complex subunit Asterix (106 aa).

The disordered stretch occupies residues 1-29 (MSANNMSDPRRPNKVLRYKPPPSECNPAL). The residue at position 2 (serine 2) is an N-acetylserine. Residues 2-32 (SANNMSDPRRPNKVLRYKPPPSECNPALDDP) are Cytoplasmic-facing. Residues 33–51 (TPDYMNLLGMIFSMCGLML) traverse the membrane as a helical segment. A topological domain (lumenal) is located at residue lysine 52. A helical membrane pass occupies residues 53–70 (LKWCAWVAVYCSFISFAN). The Cytoplasmic segment spans residues 71 to 74 (SRSS). A helical transmembrane segment spans residues 75-95 (EDTKQMMSSFMLSISAVVMSY). Topologically, residues 96–106 (LQNPQPMTPPW) are lumenal.

This sequence belongs to the Asterix family. In terms of assembly, component of the PAT complex, composed of WDR83OS/Asterix and CCDC47. The PAT complex is part of the multi-pass translocon (MPT) complex, composed of three subcomplexes, the GEL complex (composed of RAB5IF/OPTI and TMCO1), the BOS complex (composed of NCLN/Nicalin, NOMO1 and TMEM147) and the PAT complex (composed of WDR83OS/Asterix and CCDC47). The MPT complex associates with the SEC61 complex.

The protein resides in the endoplasmic reticulum membrane. Functionally, component of the multi-pass translocon (MPT) complex that mediates insertion of multi-pass membrane proteins into the lipid bilayer of membranes. The MPT complex takes over after the SEC61 complex: following membrane insertion of the first few transmembrane segments of proteins by the SEC61 complex, the MPT complex occludes the lateral gate of the SEC61 complex to promote insertion of subsequent transmembrane regions. Within the MPT complex, the PAT subcomplex sequesters any highly polar regions in the transmembrane domains away from the non-polar membrane environment until they can be buried in the interior of the fully assembled protein. Within the PAT subcomplex, WDR83OS/Asterix binds to and redirects the substrate to a location behind the SEC61 complex. In Bos taurus (Bovine), this protein is PAT complex subunit Asterix (WDR83OS).